Reading from the N-terminus, the 360-residue chain is Histidinol-phosphate aminotransferase 2 (360 aa).

Residue Lys-218 is modified to N6-(pyridoxal phosphate)lysine.

Belongs to the class-II pyridoxal-phosphate-dependent aminotransferase family. Histidinol-phosphate aminotransferase subfamily. Homodimer. The cofactor is pyridoxal 5'-phosphate.

It catalyses the reaction L-histidinol phosphate + 2-oxoglutarate = 3-(imidazol-4-yl)-2-oxopropyl phosphate + L-glutamate. The protein operates within amino-acid biosynthesis; L-histidine biosynthesis; L-histidine from 5-phospho-alpha-D-ribose 1-diphosphate: step 7/9. This chain is Histidinol-phosphate aminotransferase 2, found in Nitrosococcus oceani (strain ATCC 19707 / BCRC 17464 / JCM 30415 / NCIMB 11848 / C-107).